Here is a 323-residue protein sequence, read N- to C-terminus: GQPKAPSVFPLAPCCGDTPSSTVTLGCLVKGYLPEPVTVTWNSGTLTNGVRTFPSVRQSSGLYSLSSVVSVTSSSQPVTCNVAHPATNTKVDKTVAPSTCSKPTCPPPELLGGPSVFIFPPKPKDTLMISRTPEVTCVVVDVSQDDPEVQFTWYINNEQVRTARPPLREQQFNSTIRVVSTLPITHQDWLRGKEFKCKVHNKALPAPIEKTISKARGQPLEPKVYTMGPPREELSSRSVSLTCMINGFYPSDISVEWEKNGKAEDNYKTTPAVLDSDGSYFLYNKLSVPTSEWQRGDVFTCSVMHEALHNHYTQKSISRSPGK.

3 consecutive Ig-like domains span residues 6–96 (PSVF…KTVA), 114–213 (PSVF…KTIS), and 222–318 (PKVY…KSIS).

The polypeptide is Ig gamma chain C region (Oryctolagus cuniculus (Rabbit)).